Consider the following 143-residue polypeptide: Transcriptional regulator SlyA (143 aa).

In terms of domain architecture, HTH marR-type spans 2–135; that stretch reads ESTLGSDLSR…LTNLVERLEQ (134 aa). Residues 49–72 constitute a DNA-binding region (H-T-H motif); sequence QIQLAKAIGIEQPSLVRTLDQLED.

This sequence belongs to the SlyA family. As to quaternary structure, homodimer.

Functionally, transcription regulator that can specifically activate or repress expression of target genes. This Edwardsiella tarda protein is Transcriptional regulator SlyA.